The chain runs to 195 residues: dTTP/UTP pyrophosphatase (195 aa).

Asp76 (proton acceptor) is an active-site residue.

Belongs to the Maf family. YhdE subfamily. A divalent metal cation is required as a cofactor.

The protein resides in the cytoplasm. It carries out the reaction dTTP + H2O = dTMP + diphosphate + H(+). The catalysed reaction is UTP + H2O = UMP + diphosphate + H(+). Functionally, nucleoside triphosphate pyrophosphatase that hydrolyzes dTTP and UTP. May have a dual role in cell division arrest and in preventing the incorporation of modified nucleotides into cellular nucleic acids. The polypeptide is dTTP/UTP pyrophosphatase (Shewanella frigidimarina (strain NCIMB 400)).